We begin with the raw amino-acid sequence, 256 residues long: 5'-nucleotidase SurE (256 aa).

A divalent metal cation is bound by residues Asp13, Asp14, Ser44, and Asn101.

The protein belongs to the SurE nucleotidase family. A divalent metal cation serves as cofactor.

The protein localises to the cytoplasm. The catalysed reaction is a ribonucleoside 5'-phosphate + H2O = a ribonucleoside + phosphate. In terms of biological role, nucleotidase that shows phosphatase activity on nucleoside 5'-monophosphates. This is 5'-nucleotidase SurE from Porphyromonas gingivalis (strain ATCC 33277 / DSM 20709 / CIP 103683 / JCM 12257 / NCTC 11834 / 2561).